We begin with the raw amino-acid sequence, 83 residues long: Small ribosomal subunit protein uS17 (83 aa).

It belongs to the universal ribosomal protein uS17 family. In terms of assembly, part of the 30S ribosomal subunit.

One of the primary rRNA binding proteins, it binds specifically to the 5'-end of 16S ribosomal RNA. In Synechococcus sp. (strain RCC307), this protein is Small ribosomal subunit protein uS17.